Consider the following 434-residue polypeptide: Meiosis-specific kinetochore protein (434 aa).

Disordered stretches follow at residues 1-102 and 249-289; these read MDKI…PCET and VFAE…PDNK. The span at 46–62 shows a compositional bias: basic and acidic residues; sequence KGKEQGLRKITEKKELS. Positions 64–76 are enriched in polar residues; sequence LTGSSSQRPSLLS. The POLO box domain (PBD)-binding motif lies at 334–336; it reads STP. The segment at 391 to 394 is required for localization to kinetochores; it reads EICC. The tract at residues 404–424 is disordered; the sequence is QMRRKDPAVKNRCSPPKDVPL.

As to quaternary structure, interacts with CENPC. Interacts with PLK1; required for recruitment of PLK1 at kinetochores. In terms of tissue distribution, germ cell-specific. Expressed in both testis and ovary. Not expressed in other tissues.

The protein resides in the chromosome. It is found in the centromere. The protein localises to the kinetochore. Functionally, key regulator of kinetochore function during meiosis I: required both for mono-orientation of kinetochores on sister chromosomes and protection of centromeric cohesin from separase-mediated cleavage. Acts by facilitating kinetochore mono-orientation during meiosis I, when kinetochores on sister chromosomes face the same direction and are thus captured and pulled by spindle fibers from the same pole. Also required to prevent cleavage of cohesin at centromeres during meiosis I, possibly by acting as a regulator of the shugoshin-dependent protection pathway. Acts in collaboration with PLK1: required for PLK1 enrichment to kinetochores. Not required during meiosis II or mitosis. The chain is Meiosis-specific kinetochore protein from Mus musculus (Mouse).